A 330-amino-acid chain; its full sequence is Geranylgeranyl diphosphate synthase (330 aa).

Isopentenyl diphosphate contacts are provided by Lys43, Arg46, and His75. Asp82 and Asp86 together coordinate Mg(2+). Arg91 is a binding site for an all-trans-polyprenyl diphosphate. Residue Arg92 participates in isopentenyl diphosphate binding. An all-trans-polyprenyl diphosphate contacts are provided by Lys175, Thr176, Gln213, Lys230, and Lys240.

Belongs to the FPP/GGPP synthase family. Mg(2+) serves as cofactor.

The catalysed reaction is isopentenyl diphosphate + (2E,6E)-farnesyl diphosphate = (2E,6E,10E)-geranylgeranyl diphosphate + diphosphate. It participates in isoprenoid biosynthesis; geranylgeranyl diphosphate biosynthesis; geranylgeranyl diphosphate from farnesyl diphosphate and isopentenyl diphosphate: step 1/1. Functionally, catalyzes the condensation of isopentenyl pyrophosphate with the allylic pyrophosphates to yield geranylgeranyl diphosphate (GGPP) which is a precursor of the ether-linked lipids. It is able to use dimethylallyl diphosphate (DMAPP), geranyl diphosphate (GPP), and (all-E)-geranyl diphosphate (E-FPP) as an allylic substrate. In Sulfolobus acidocaldarius (strain ATCC 33909 / DSM 639 / JCM 8929 / NBRC 15157 / NCIMB 11770), this protein is Geranylgeranyl diphosphate synthase (gds).